A 73-amino-acid chain; its full sequence is MNWELCDDYPSKAPPETCNKVDGARRCRTSCNNEGYGGANCNLKGKVKVCECTILRVCLPHHKRPPHVPKPPK.

Cystine bridges form between Cys6–Cys58, Cys18–Cys41, Cys27–Cys50, and Cys31–Cys52.

Belongs to the DEFL family.

The sequence is that of Putative defensin-like protein 42 from Arabidopsis thaliana (Mouse-ear cress).